We begin with the raw amino-acid sequence, 361 residues long: Peptide chain release factor 1 (361 aa).

Gln237 carries the post-translational modification N5-methylglutamine. The segment at 286-306 is disordered; that stretch reads AKQDQEQAAKRKSLVGSGDRS.

It belongs to the prokaryotic/mitochondrial release factor family. Methylated by PrmC. Methylation increases the termination efficiency of RF1.

The protein localises to the cytoplasm. Functionally, peptide chain release factor 1 directs the termination of translation in response to the peptide chain termination codons UAG and UAA. The polypeptide is Peptide chain release factor 1 (Coxiella burnetii (strain CbuG_Q212) (Coxiella burnetii (strain Q212))).